The sequence spans 260 residues: Malonyl-[acyl-carrier protein] O-methyltransferase (260 aa).

This sequence belongs to the methyltransferase superfamily.

It carries out the reaction malonyl-[ACP] + S-adenosyl-L-methionine = malonyl-[ACP] methyl ester + S-adenosyl-L-homocysteine. It participates in cofactor biosynthesis; biotin biosynthesis. Converts the free carboxyl group of a malonyl-thioester to its methyl ester by transfer of a methyl group from S-adenosyl-L-methionine (SAM). It allows to synthesize pimeloyl-ACP via the fatty acid synthetic pathway. The polypeptide is Malonyl-[acyl-carrier protein] O-methyltransferase (Haemophilus influenzae (strain ATCC 51907 / DSM 11121 / KW20 / Rd)).